The chain runs to 444 residues: Phosphoribosylamine--glycine ligase (444 aa).

Residues 109–324 (RNLFKKYEID…FLDVCFAIAE (216 aa)) form the ATP-grasp domain. Position 140-202 (140-202 (MTSLGKDVVV…EEKLVGVEFT (63 aa))) interacts with ATP. Gln282, Glu294, and Asn296 together coordinate Mg(2+). Mn(2+)-binding residues include Gln282, Glu294, and Asn296.

Belongs to the GARS family. Mg(2+) serves as cofactor. Requires Mn(2+) as cofactor.

The enzyme catalyses 5-phospho-beta-D-ribosylamine + glycine + ATP = N(1)-(5-phospho-beta-D-ribosyl)glycinamide + ADP + phosphate + H(+). Its pathway is purine metabolism; IMP biosynthesis via de novo pathway; N(1)-(5-phospho-D-ribosyl)glycinamide from 5-phospho-alpha-D-ribose 1-diphosphate: step 2/2. This is Phosphoribosylamine--glycine ligase from Methanococcus maripaludis (strain C5 / ATCC BAA-1333).